The chain runs to 214 residues: Pyrrolidone-carboxylate peptidase (214 aa).

Residues Glu-80, Cys-143, and His-166 contribute to the active site.

This sequence belongs to the peptidase C15 family. As to quaternary structure, homotetramer.

Its subcellular location is the cytoplasm. The catalysed reaction is Release of an N-terminal pyroglutamyl group from a polypeptide, the second amino acid generally not being Pro.. Functionally, removes 5-oxoproline from various penultimate amino acid residues except L-proline. The chain is Pyrrolidone-carboxylate peptidase from Klebsiella pneumoniae (strain 342).